The primary structure comprises 201 residues: 3-isopropylmalate dehydratase small subunit (201 aa).

Belongs to the LeuD family. LeuD type 1 subfamily. In terms of assembly, heterodimer of LeuC and LeuD.

It catalyses the reaction (2R,3S)-3-isopropylmalate = (2S)-2-isopropylmalate. Its pathway is amino-acid biosynthesis; L-leucine biosynthesis; L-leucine from 3-methyl-2-oxobutanoate: step 2/4. Catalyzes the isomerization between 2-isopropylmalate and 3-isopropylmalate, via the formation of 2-isopropylmaleate. This Rhodopseudomonas palustris (strain HaA2) protein is 3-isopropylmalate dehydratase small subunit.